We begin with the raw amino-acid sequence, 145 residues long: MGFSETQEELVLRSWQSMKKDSESIALKFFLRIFEIAPAAKQMFSFLRDSGDDVPLESHPKACESATQLRKTGDVKVREATLRRLGATHVKAGVADAHFEVVKTALLDTIKDAVPEMWSPEMKGAWEEAYDQLAAAIKEEMKKAA.

A Globin domain is found at Gly-2–Lys-142. Positions Glu-35–Ala-39 match the Homodimerization motif. Residues Ser-45, His-59, Lys-61, Arg-84, Thr-88, and His-89 each coordinate heme b. The short motif at Asp-96 to Asp-108 is the Homodimerization element.

This sequence belongs to the plant globin family. In terms of assembly, homodimer. The cofactor is heme b. In terms of tissue distribution, expressed in embryonic (embryos, coleoptiles and seminal roots) and vegetative (leaves and roots) organs.

The protein localises to the cytoplasm. The protein resides in the nucleus. It carries out the reaction Fe(III)-heme b-[protein] + nitric oxide + H2O = Fe(II)-heme b-[protein] + nitrite + 2 H(+). Phytoglobin that reduces nitrite to nitric oxide under anoxic conditions (e.g. during flooding or in waterlogged soil). May not function as an oxygen storage or transport protein. Has an unusually high affinity for O(2) through an hexacoordinate heme iron because of a very low dissociation constant. The protein is Anaerobic nitrite reductase NSHB5 of Oryza sativa subsp. indica (Rice).